A 51-amino-acid chain; its full sequence is DNA-binding protein (51 aa).

The tract at residues M1 to Y51 is disordered. Tandem repeats lie at residues R5–S10 and R17–S22. The interval R5–S22 is 2 X 6 AA repeats of R-R-R-R-S-S. Over residues T16–Y51 the composition is skewed to basic residues.

Probably phosphorylated in infected cells.

The protein localises to the virion. Functionally, thought to be responsible for DNA condensation during packaging of the nucleocapsids. The protein is DNA-binding protein (P6.5) of Orgyia pseudotsugata (Douglas-fir tussock moth).